The primary structure comprises 1601 residues: Polycomb group protein Psc (1601 aa).

Disordered regions lie at residues 1–91 and 165–245; these read MMTP…TTTT and NGIK…DLAT. Low complexity-rich tracts occupy residues 8–91 and 182–198; these read AIQP…TTTT and SSSS…SSSS. The segment covering 199 to 215 has biased composition (polar residues); it reads WPTTRRATSEDASSNGG. Residues 228–245 are compositionally biased toward low complexity; that stretch reads TAAVAASSTATTTSDLAT. Residues 263 to 302 form an RING-type zinc finger; the sequence is CHLCQGYLINATTIVECLHSFCHSCLINHLRKERFCPRCE. Disordered regions lie at residues 561–693, 711–856, 895–960, 1011–1097, 1116–1315, 1330–1408, and 1512–1601; these read KREK…FSED, VESP…NRTP, IGGG…SNNY, YKYT…EKQQ, SITI…LAPK, NPAA…HPVM, and AATG…TKSK. Low complexity predominate over residues 567 to 590; it reads SPQMSSKSSSKSSPCTPVSSPSEP. Basic and acidic residues predominate over residues 611-637; that stretch reads DPERREIVKPLKPEKESRSKKKDKDGS. Positions 638–649 are enriched in low complexity; that stretch reads PKSSSSSSSSSS. 2 positions are modified to phosphoserine: S656 and S658. Positions 676–689 are enriched in polar residues; it reads SGVSTLSPRVTSGA. A compositionally biased stretch (low complexity) spans 729-739; the sequence is SVQQSASPKSK. Residues 812 to 822 show a composition bias toward pro residues; the sequence is LMPPPAKPPML. Polar residues predominate over residues 929 to 938; it reads TTPSQGNKNV. Positions 1011–1022 are enriched in low complexity; sequence YKYTPKPTPNSG. The segment covering 1036–1045 has biased composition (gly residues); sequence LGGGNGGSLG. Over residues 1069-1085 the composition is skewed to low complexity; it reads SSATQSGGNNGIVNNNI. Polar residues predominate over residues 1116 to 1133; that stretch reads SITISRDNGDSSSPNNGQ. Residue S1139 is modified to Phosphoserine. Pro residues predominate over residues 1204 to 1217; that stretch reads PQLPKVATPPPPSS. 3 positions are modified to phosphothreonine: T1222, T1236, and T1251. The segment covering 1247–1258 has biased composition (basic and acidic residues); the sequence is VDKKTPSPEKRT. Phosphoserine occurs at positions 1253, 1266, and 1274. The span at 1261-1272 shows a compositional bias: polar residues; the sequence is QMGSHSPTASEN. Polar residues-rich tracts occupy residues 1352–1375 and 1561–1587; these read QSGQ…SPPA and APQT…NNGA.

As to quaternary structure, component of PRC1 complex, which contains many PcG proteins like Pc, ph, Scm, Psc, Sce and also chromatin-remodeling proteins such as histone deacetylases. This complex is distinct from the Esc/E(z) complex, at least composed of esc, E(z), Su(z)12, HDAC1/Rpd3 and Caf1-55. The 2 complexes however cooperate and interact together during the first 3 hours of development to establish PcG silencing.

It is found in the nucleus. Functionally, polycomb group (PcG) protein. PcG proteins act by forming multiprotein complexes, which are required to maintain the transcriptionally repressive state of homeotic genes throughout development. PcG proteins are not required to initiate repression, but to maintain it during later stages of development. Component of the PcG multiprotein PRC1 complex, a complex that acts via chromatin remodeling and modification of histones; it mediates monoubiquitination of histone H2A 'Lys-118', rendering chromatin heritably changed in its expressibility. Needed to maintain expression patterns of the homeotic selector genes of the Antennapedia (Antp-C) and Bithorax (BX-C) complexes, and hence for the maintenance of segmental determination. The chain is Polycomb group protein Psc (Psc) from Drosophila melanogaster (Fruit fly).